A 394-amino-acid polypeptide reads, in one-letter code: Phosphatidylinositol 4-phosphate 5-kinase-like protein 1 (394 aa).

A PIPK domain is found at 36–393; the sequence is DKQSRLGLFE…RLCQWVEAHT (358 aa).

In terms of assembly, heterodimerizes with other type I phosphatidylinositol 4-phosphate 5-kinase.

The protein resides in the cytoplasm. Its subcellular location is the membrane. It carries out the reaction a 1,2-diacyl-sn-glycero-3-phospho-(1D-myo-inositol 4-phosphate) + ATP = a 1,2-diacyl-sn-glycero-3-phospho-(1D-myo-inositol-4,5-bisphosphate) + ADP + H(+). Its function is as follows. May act as a scaffold to localize and regulate type I PI(4)P 5-kinases to specific compartments within the cell, where they generate PI(4,5)P2 for actin nucleation, signaling and scaffold protein recruitment and conversion to PI(3,4,5)P3. The chain is Phosphatidylinositol 4-phosphate 5-kinase-like protein 1 (PIP5KL1) from Homo sapiens (Human).